A 380-amino-acid chain; its full sequence is Ribosomal RNA small subunit methyltransferase, mitochondrial (380 aa).

The transit peptide at 1-26 (MILRLKDQTLIKINSTRSYLSSLVFR) directs the protein to the mitochondrion. H70, L72, G97, E118, D146, and N161 together coordinate S-adenosyl-L-methionine.

It belongs to the class I-like SAM-binding methyltransferase superfamily. rRNA adenine N(6)-methyltransferase family.

It is found in the mitochondrion. It catalyses the reaction adenosine(1914)/adenosine(1915) in 18S rRNA + 4 S-adenosyl-L-methionine = N(6)-dimethyladenosine(1914)/N(6)-dimethyladenosine(1915) in 18S rRNA + 4 S-adenosyl-L-homocysteine + 4 H(+). In terms of biological role, N6-adenine methyltransferase which modifies the AA dinucleotide at the plant mitochondrial 18S rRNA nucleotides A1914 and A1915. Not active as mitochondrial transcription factor. The protein is Ribosomal RNA small subunit methyltransferase, mitochondrial of Arabidopsis thaliana (Mouse-ear cress).